A 256-amino-acid chain; its full sequence is Ubiquinone/menaquinone biosynthesis C-methyltransferase UbiE (256 aa).

Residues 1 to 12 (MTDPRKGDHAEP) show a composition bias toward basic and acidic residues. The tract at residues 1-21 (MTDPRKGDHAEPTTHFGYQDV) is disordered. S-adenosyl-L-methionine is bound by residues T79, D100, and 128 to 129 (DA).

The protein belongs to the class I-like SAM-binding methyltransferase superfamily. MenG/UbiE family.

The enzyme catalyses a 2-demethylmenaquinol + S-adenosyl-L-methionine = a menaquinol + S-adenosyl-L-homocysteine + H(+). The catalysed reaction is a 2-methoxy-6-(all-trans-polyprenyl)benzene-1,4-diol + S-adenosyl-L-methionine = a 5-methoxy-2-methyl-3-(all-trans-polyprenyl)benzene-1,4-diol + S-adenosyl-L-homocysteine + H(+). It participates in quinol/quinone metabolism; menaquinone biosynthesis; menaquinol from 1,4-dihydroxy-2-naphthoate: step 2/2. It functions in the pathway cofactor biosynthesis; ubiquinone biosynthesis. Its function is as follows. Methyltransferase required for the conversion of demethylmenaquinol (DMKH2) to menaquinol (MKH2) and the conversion of 2-polyprenyl-6-methoxy-1,4-benzoquinol (DDMQH2) to 2-polyprenyl-3-methyl-6-methoxy-1,4-benzoquinol (DMQH2). This is Ubiquinone/menaquinone biosynthesis C-methyltransferase UbiE from Pseudomonas entomophila (strain L48).